Reading from the N-terminus, the 162-residue chain is NADPH-dependent 7-cyano-7-deazaguanine reductase (162 aa).

Cys-53 acts as the Thioimide intermediate in catalysis. Asp-60 serves as the catalytic Proton donor. Substrate is bound by residues 75 to 77 (VES) and 94 to 95 (HE).

The protein belongs to the GTP cyclohydrolase I family. QueF type 1 subfamily.

The protein resides in the cytoplasm. It carries out the reaction 7-aminomethyl-7-carbaguanine + 2 NADP(+) = 7-cyano-7-deazaguanine + 2 NADPH + 3 H(+). It participates in tRNA modification; tRNA-queuosine biosynthesis. In terms of biological role, catalyzes the NADPH-dependent reduction of 7-cyano-7-deazaguanine (preQ0) to 7-aminomethyl-7-deazaguanine (preQ1). The chain is NADPH-dependent 7-cyano-7-deazaguanine reductase from Exiguobacterium sp. (strain ATCC BAA-1283 / AT1b).